Reading from the N-terminus, the 111-residue chain is Large ribosomal subunit protein uL22 (111 aa).

Belongs to the universal ribosomal protein uL22 family. Part of the 50S ribosomal subunit.

In terms of biological role, this protein binds specifically to 23S rRNA; its binding is stimulated by other ribosomal proteins, e.g. L4, L17, and L20. It is important during the early stages of 50S assembly. It makes multiple contacts with different domains of the 23S rRNA in the assembled 50S subunit and ribosome. Its function is as follows. The globular domain of the protein is located near the polypeptide exit tunnel on the outside of the subunit, while an extended beta-hairpin is found that lines the wall of the exit tunnel in the center of the 70S ribosome. The protein is Large ribosomal subunit protein uL22 of Francisella tularensis subsp. tularensis (strain FSC 198).